Consider the following 122-residue polypeptide: Large ribosomal subunit protein uL14 (122 aa).

The protein belongs to the universal ribosomal protein uL14 family. Part of the 50S ribosomal subunit. Forms a cluster with proteins L3 and L19. In the 70S ribosome, L14 and L19 interact and together make contacts with the 16S rRNA in bridges B5 and B8.

Functionally, binds to 23S rRNA. Forms part of two intersubunit bridges in the 70S ribosome. The chain is Large ribosomal subunit protein uL14 from Thermotoga petrophila (strain ATCC BAA-488 / DSM 13995 / JCM 10881 / RKU-1).